Reading from the N-terminus, the 467-residue chain is Indoleacetamide hydrolase (467 aa).

Residues Lys-74 and Ser-149 each act as charge relay system in the active site. The active-site Acyl-ester intermediate is Ser-173.

The protein belongs to the amidase family.

It functions in the pathway plant hormone metabolism; auxin biosynthesis. Its function is as follows. Hydrolyzes indole-3-acetamide (IAM) into indole-3-acetic acid (IAA). The polypeptide is Indoleacetamide hydrolase (tms2) (Rhizobium radiobacter (Agrobacterium tumefaciens)).